Here is a 465-residue protein sequence, read N- to C-terminus: Methylenetetrahydrofolate--tRNA-(uracil-5-)-methyltransferase TrmFO (465 aa).

An FAD-binding site is contributed by 11–16 (GGGLAG).

The protein belongs to the MnmG family. TrmFO subfamily. The cofactor is FAD.

It is found in the cytoplasm. It carries out the reaction uridine(54) in tRNA + (6R)-5,10-methylene-5,6,7,8-tetrahydrofolate + NADH + H(+) = 5-methyluridine(54) in tRNA + (6S)-5,6,7,8-tetrahydrofolate + NAD(+). The catalysed reaction is uridine(54) in tRNA + (6R)-5,10-methylene-5,6,7,8-tetrahydrofolate + NADPH + H(+) = 5-methyluridine(54) in tRNA + (6S)-5,6,7,8-tetrahydrofolate + NADP(+). Functionally, catalyzes the folate-dependent formation of 5-methyl-uridine at position 54 (M-5-U54) in all tRNAs. This chain is Methylenetetrahydrofolate--tRNA-(uracil-5-)-methyltransferase TrmFO, found in Acaryochloris marina (strain MBIC 11017).